The sequence spans 241 residues: Large ribosomal subunit protein uL3 (241 aa).

The residue at position 157 (Gln-157) is an N5-methylglutamine.

Belongs to the universal ribosomal protein uL3 family. As to quaternary structure, part of the 50S ribosomal subunit. Forms a cluster with proteins L14 and L19. In terms of processing, methylated by PrmB.

Functionally, one of the primary rRNA binding proteins, it binds directly near the 3'-end of the 23S rRNA, where it nucleates assembly of the 50S subunit. This Vesicomyosocius okutanii subsp. Calyptogena okutanii (strain HA) protein is Large ribosomal subunit protein uL3.